Reading from the N-terminus, the 210-residue chain is ATP-dependent Clp protease proteolytic subunit (210 aa).

S107 functions as the Nucleophile in the catalytic mechanism. The active site involves H132.

It belongs to the peptidase S14 family. As to quaternary structure, fourteen ClpP subunits assemble into 2 heptameric rings which stack back to back to give a disk-like structure with a central cavity, resembling the structure of eukaryotic proteasomes.

Its subcellular location is the cytoplasm. It carries out the reaction Hydrolysis of proteins to small peptides in the presence of ATP and magnesium. alpha-casein is the usual test substrate. In the absence of ATP, only oligopeptides shorter than five residues are hydrolyzed (such as succinyl-Leu-Tyr-|-NHMec, and Leu-Tyr-Leu-|-Tyr-Trp, in which cleavage of the -Tyr-|-Leu- and -Tyr-|-Trp bonds also occurs).. Cleaves peptides in various proteins in a process that requires ATP hydrolysis. Has a chymotrypsin-like activity. Plays a major role in the degradation of misfolded proteins. In Cereibacter sphaeroides (strain ATCC 17025 / ATH 2.4.3) (Rhodobacter sphaeroides), this protein is ATP-dependent Clp protease proteolytic subunit.